A 138-amino-acid polypeptide reads, in one-letter code: MSGTLLAFDFGTKSIGVAIGQRITGTARPLPAIKAQDGTPDWTLIERLLKEWQPDEIIVGLPLNMDGTEQPLTARARKFANRIHGRFGVTVTLHDERLSTVEARSGLFEQGGYRALNKGKVDSASAVIILESYFEQGY.

This sequence belongs to the YqgF nuclease family.

It localises to the cytoplasm. Could be a nuclease involved in processing of the 5'-end of pre-16S rRNA. This chain is Putative pre-16S rRNA nuclease, found in Salmonella arizonae (strain ATCC BAA-731 / CDC346-86 / RSK2980).